The following is a 227-amino-acid chain: MICOS complex subunit MIC19 (227 aa).

Gly-2 carries the N-myristoyl glycine lipid modification. A Phosphoserine modification is found at Ser-29. A disordered region spans residues 34 to 60 (DRMKETSPSGPKSQRYSGTYGASVSDE). Positions 39 to 55 (TSPSGPKSQRYSGTYGA) are enriched in polar residues. Tyr-49 carries the post-translational modification Phosphotyrosine. A phosphoserine mark is found at Ser-50, Ser-56, and Ser-58. The residue at position 142 (Lys-142) is an N6-acetyllysine. A CHCH domain is found at 180-222 (HPVCADLQAQILQCYRQNTQQTLSCSALASQYMRCVNQAKQST). 2 consecutive short sequence motifs (cx9C motif) follow at residues 183-193 (CADLQAQILQC) and 204-214 (CSALASQYMRC). Cystine bridges form between Cys-183–Cys-214 and Cys-193–Cys-204.

Belongs to the MICOS complex subunit Mic19 family. Metazoan Mic19 subfamily. As to quaternary structure, component of the mitochondrial contact site and cristae organizing system (MICOS) complex, composed of at least MICOS10/MIC10, CHCHD3/MIC19, CHCHD6/MIC25, APOOL/MIC27, IMMT/MIC60, APOO/MIC23/MIC26 and MICOS13/MIC13. This complex was also known under the names MINOS or MitOS complex. The MICOS complex associates with mitochondrial outer membrane proteins SAMM50, MTX1 and MTX2 (together described as components of the mitochondrial outer membrane sorting assembly machinery (SAM) complex) and DNAJC11, mitochondrial inner membrane protein TMEM11 and with HSPA9. The MICOS and SAM complexes together with DNAJC11 are part of a large protein complex spanning both membranes termed the mitochondrial intermembrane space bridging (MIB) complex. Interacts with HSPA1A/HSPA1B and OPA1, preferentially with the soluble OPA1 form. Interacts with IMMT/MIC60.

Its subcellular location is the mitochondrion inner membrane. It is found in the cytoplasm. The protein resides in the nucleus. The protein localises to the mitochondrion. Component of the MICOS complex, a large protein complex of the mitochondrial inner membrane that plays crucial roles in the maintenance of crista junctions, inner membrane architecture, and formation of contact sites to the outer membrane. Has also been shown to function as a transcription factor which binds to the BAG1 promoter and represses BAG1 transcription. Plays an important role in the maintenance of the MICOS complex stability and the mitochondrial cristae morphology. This is MICOS complex subunit MIC19 (CHCHD3) from Bos taurus (Bovine).